Consider the following 553-residue polypeptide: Phosphoenolpyruvate carboxykinase (ATP) (553 aa).

Positions 1–22 are disordered; it reads MAPPTAVGSSINFEGHPTIKST. Position 255–262 (255–262) interacts with ATP; the sequence is GLSGTGKT.

It belongs to the phosphoenolpyruvate carboxykinase (ATP) family.

The enzyme catalyses oxaloacetate + ATP = phosphoenolpyruvate + ADP + CO2. Its pathway is carbohydrate biosynthesis; gluconeogenesis. This Candida albicans (Yeast) protein is Phosphoenolpyruvate carboxykinase (ATP) (PCK1).